The following is a 246-amino-acid chain: Phosphate import ATP-binding protein PstB (246 aa).

Residues 3–241 form the ABC transporter domain; it reads AKTTNLNLFY…PKQEKTKAYL (239 aa). 35-42 is a binding site for ATP; that stretch reads GASGCGKS.

The protein belongs to the ABC transporter superfamily. Phosphate importer (TC 3.A.1.7) family. As to quaternary structure, the complex is composed of two ATP-binding proteins (PstB), two transmembrane proteins (PstC and PstA) and a solute-binding protein (PstS).

It is found in the cell inner membrane. It catalyses the reaction phosphate(out) + ATP + H2O = ADP + 2 phosphate(in) + H(+). Its function is as follows. Part of the ABC transporter complex PstSACB involved in phosphate import. Responsible for energy coupling to the transport system. In Campylobacter jejuni subsp. jejuni serotype O:2 (strain ATCC 700819 / NCTC 11168), this protein is Phosphate import ATP-binding protein PstB.